Reading from the N-terminus, the 284-residue chain is Release factor glutamine methyltransferase (284 aa).

S-adenosyl-L-methionine is bound by residues 125–129 (GVGSG), glutamate 148, and asparagine 190. A substrate-binding site is contributed by 190 to 193 (NPPY).

It belongs to the protein N5-glutamine methyltransferase family. PrmC subfamily.

It catalyses the reaction L-glutaminyl-[peptide chain release factor] + S-adenosyl-L-methionine = N(5)-methyl-L-glutaminyl-[peptide chain release factor] + S-adenosyl-L-homocysteine + H(+). Functionally, methylates the class 1 translation termination release factors RF1/PrfA and RF2/PrfB on the glutamine residue of the universally conserved GGQ motif. This chain is Release factor glutamine methyltransferase, found in Geobacter sulfurreducens (strain ATCC 51573 / DSM 12127 / PCA).